Reading from the N-terminus, the 294-residue chain is 4-hydroxy-tetrahydrodipicolinate synthase (294 aa).

Position 47 (Thr-47) interacts with pyruvate. Tyr-136 serves as the catalytic Proton donor/acceptor. Lys-164 acts as the Schiff-base intermediate with substrate in catalysis. Val-206 lines the pyruvate pocket.

The protein belongs to the DapA family. In terms of assembly, homotetramer; dimer of dimers.

It is found in the cytoplasm. The enzyme catalyses L-aspartate 4-semialdehyde + pyruvate = (2S,4S)-4-hydroxy-2,3,4,5-tetrahydrodipicolinate + H2O + H(+). It participates in amino-acid biosynthesis; L-lysine biosynthesis via DAP pathway; (S)-tetrahydrodipicolinate from L-aspartate: step 3/4. Functionally, catalyzes the condensation of (S)-aspartate-beta-semialdehyde [(S)-ASA] and pyruvate to 4-hydroxy-tetrahydrodipicolinate (HTPA). In Acaryochloris marina (strain MBIC 11017), this protein is 4-hydroxy-tetrahydrodipicolinate synthase.